Here is a 39-residue protein sequence, read N- to C-terminus: Adipokinetic prohormone type 2 (39 aa).

Q1 carries the pyrrolidone carboxylic acid modification. W8 carries the post-translational modification Tryptophan amide.

The protein belongs to the AKH/HRTH/RPCH family. As to quaternary structure, adipokinetic hormone precursor-related peptide (APRP) can form three type of disulfide-bond dimers: p1 (alpha-alpha), p2 (alpha-beta), and p3 (beta-beta).

It localises to the secreted. This hormone, released from cells in the corpora cardiaca, causes release of diglycerides from the fat body and stimulation of muscles to use these diglycerides as an energy source during energy-demanding processes. In Schistocerca gregaria (Desert locust), this protein is Adipokinetic prohormone type 2.